Consider the following 307-residue polypeptide: Homoserine O-acetyltransferase (307 aa).

Cysteine 142 serves as the catalytic Acyl-thioester intermediate. Residues lysine 163 and serine 192 each contribute to the substrate site. Histidine 235 serves as the catalytic Proton acceptor. Glutamate 237 is an active-site residue. Substrate is bound at residue arginine 249.

Belongs to the MetA family.

It localises to the cytoplasm. The catalysed reaction is L-homoserine + acetyl-CoA = O-acetyl-L-homoserine + CoA. It functions in the pathway amino-acid biosynthesis; L-methionine biosynthesis via de novo pathway; O-acetyl-L-homoserine from L-homoserine: step 1/1. Its function is as follows. Transfers an acetyl group from acetyl-CoA to L-homoserine, forming acetyl-L-homoserine. The sequence is that of Homoserine O-acetyltransferase from Rhizobium johnstonii (strain DSM 114642 / LMG 32736 / 3841) (Rhizobium leguminosarum bv. viciae).